A 218-amino-acid chain; its full sequence is Small ribosomal subunit protein uS3c (218 aa).

Positions 47–118 (VRRHMKNYSN…KLNISIAKVA (72 aa)) constitute a KH type-2 domain.

The protein belongs to the universal ribosomal protein uS3 family. Part of the 30S ribosomal subunit.

It localises to the plastid. The protein resides in the chloroplast. The sequence is that of Small ribosomal subunit protein uS3c (rps3) from Ginkgo biloba (Ginkgo).